We begin with the raw amino-acid sequence, 689 residues long: Protein CFAP20DC (689 aa).

3 disordered regions span residues L241–E263, S333–E423, and I584–V659. Polar residues-rich tracts occupy residues T251–N260 and E343–P359. Positions S394–E405 are enriched in acidic residues. A compositionally biased stretch (polar residues) spans H409–P421. Residues I584–T593 show a composition bias toward low complexity.

This Homo sapiens (Human) protein is Protein CFAP20DC.